The following is a 559-amino-acid chain: DnaJ homolog subfamily C member 11 (559 aa).

The residue at position 2 (Ala-2) is an N-acetylalanine. A J domain is found at 14–82 (DYYSLLNVRR…QTRAIYDIYG (69 aa)). Ser-204 bears the Phosphoserine mark. Residues 415–457 (QKEKELEKQRENTASDILQKKQEAEAAVRLMQESVRRIIEAEE) are a coiled coil.

The protein belongs to the DNAJC11 family. As to quaternary structure, associates with the mitochondrial contact site and cristae organizing system (MICOS) complex, composed of at least MICOS10/MIC10, CHCHD3/MIC19, CHCHD6/MIC25, APOOL/MIC27, IMMT/MIC60, APOO/MIC23/MIC26 and QIL1/MIC13. This complex was also known under the names MINOS or MitOS complex. The MICOS complex associates with mitochondrial outer membrane proteins SAMM50, MTX1 and MTX2 (together described as components of the mitochondrial outer membrane sorting assembly machinery (SAM) complex) and DNAJC11, mitochondrial inner membrane protein TMEM11 and with HSPA9. The MICOS and SAM complexes together with DNAJC11 are part of a large protein complex spanning both membranes termed the mitochondrial intermembrane space bridging (MIB) complex.

Its subcellular location is the mitochondrion. It is found in the mitochondrion outer membrane. In terms of biological role, required for mitochondrial inner membrane organization. Seems to function through its association with the MICOS complex and the mitochondrial outer membrane sorting assembly machinery (SAM) complex. This is DnaJ homolog subfamily C member 11 (Dnajc11) from Mus musculus (Mouse).